The following is a 200-amino-acid chain: MALAYDGAIQRLIDAFANLPGIGPKGAQRIAFYLLNAPDEESQALIDAITEVKEKVRFCDICGNVCETSPCPVCADPRRDHSVICVVEEPKDVMSIERTREYRGMYHVLGGVINPMANVQPSDLNIAKLIERLKDSEVKEVILALNPNVEGEATTSFLSQLLSQTDIKVTRLASGLPVGGDLEYADEITLGRALAGRRAV.

The C4-type zinc finger occupies 59-74; sequence CDICGNVCETSPCPVC. Positions 82-177 constitute a Toprim domain; the sequence is SVICVVEEPK…KVTRLASGLP (96 aa).

It belongs to the RecR family.

In terms of biological role, may play a role in DNA repair. It seems to be involved in an RecBC-independent recombinational process of DNA repair. It may act with RecF and RecO. This is Recombination protein RecR from Bifidobacterium adolescentis (strain ATCC 15703 / DSM 20083 / NCTC 11814 / E194a).